We begin with the raw amino-acid sequence, 704 residues long: Elongation factor G (704 aa).

In terms of domain architecture, tr-type G spans 8–291 (DRVRNIGIMA…AVIEYLASPV (284 aa)). Residues 17–24 (AHIDAGKT), 90–94 (DTPGH), and 144–147 (NKMD) each bind GTP.

It belongs to the TRAFAC class translation factor GTPase superfamily. Classic translation factor GTPase family. EF-G/EF-2 subfamily.

The protein resides in the cytoplasm. Functionally, catalyzes the GTP-dependent ribosomal translocation step during translation elongation. During this step, the ribosome changes from the pre-translocational (PRE) to the post-translocational (POST) state as the newly formed A-site-bound peptidyl-tRNA and P-site-bound deacylated tRNA move to the P and E sites, respectively. Catalyzes the coordinated movement of the two tRNA molecules, the mRNA and conformational changes in the ribosome. This is Elongation factor G from Chlorobium chlorochromatii (strain CaD3).